The sequence spans 477 residues: M-phase inducer phosphatase 3 (477 aa).

Residues 1–20 (MSAEFFSSKREEGSLASGPS) are disordered. The residue at position 2 (Ser-2) is an N-acetylserine. A phosphoserine mark is found at Ser-20 and Ser-38. Thr-48 is modified (phosphothreonine; by CDK1). Residues Ser-58, Ser-62, and Ser-65 each carry the phosphoserine modification. Thr-68 is modified (phosphothreonine; by CDK1). Ser-123 bears the Phosphoserine; by CDK1 mark. The residue at position 130 (Ser-130) is a Phosphoserine. Position 131 is a phosphothreonine (Thr-131). Ser-169 carries the phosphoserine; by CDK1 modification. Ser-192 and Ser-199 each carry phosphoserine; by PLK3. Ser-218 is subject to Phosphoserine; by CDK1. Ser-220 bears the Phosphoserine; by CHEK1, CHEK2, BRSK1, MAPK14 AND MARK3 mark. One can recognise a Rhodanese domain in the interval 325-432 (LIEKFYIIDC…FFPEYMELCE (108 aa)). Cys-381 is a catalytic residue. At Ser-476 the chain carries Phosphoserine.

This sequence belongs to the MPI phosphatase family. In terms of assembly, interacts with MAPK14 and 14-3-3 proteins. When phosphorylated on Ser-130 and/or Thr-131, interacts with PLK1. Interacts with MARK3/C-TAK1. In terms of processing, phosphorylated by CHEK1 and MAPK14 at Ser-220. This phosphorylation creates a binding site for 14-3-3 protein and inhibits the phosphatase. Phosphorylated by PLK4. Phosphorylated by PLK1, leading to activate the phosphatase activity. Phosphorylation by PLK3 at Ser-192 promotes nuclear translocation. Ser-199 is a minor phosphorylation site. Phosphorylation by CDK1 occurs at G2 and G2-M transition and leads to increased activity.

The protein localises to the nucleus. It catalyses the reaction O-phospho-L-tyrosyl-[protein] + H2O = L-tyrosyl-[protein] + phosphate. Functions as a dosage-dependent inducer in mitotic control. Tyrosine protein phosphatase required for progression of the cell cycle. When phosphorylated, highly effective in activating G2 cells into prophase. Directly dephosphorylates CDK1 and activates its kinase activity. The polypeptide is M-phase inducer phosphatase 3 (CDC25C) (Bos taurus (Bovine)).